We begin with the raw amino-acid sequence, 400 residues long: Chalcone synthase C2 (400 aa).

Cys168 is a catalytic residue.

Belongs to the thiolase-like superfamily. Chalcone/stilbene synthases family.

The enzyme catalyses (E)-4-coumaroyl-CoA + 3 malonyl-CoA + 3 H(+) = 2',4,4',6'-tetrahydroxychalcone + 3 CO2 + 4 CoA. It functions in the pathway secondary metabolite biosynthesis; flavonoid biosynthesis. Functionally, the primary product of this enzyme is 4,2',4',6'-tetrahydroxychalcone (also termed naringenin-chalcone or chalcone) which can under specific conditions spontaneously isomerize into naringenin. This Zea mays (Maize) protein is Chalcone synthase C2 (C2).